The chain runs to 157 residues: Transcriptional repressor NrdR (157 aa).

The segment at 3–34 is a zinc-finger region; it reads CPHCHQNSSRVIDSRPTDEGRVIRRRRECENC. Residues 49-139 form the ATP-cone domain; it reads LLVIKKNGTR…VYRQFKDMNV (91 aa).

This sequence belongs to the NrdR family. Requires Zn(2+) as cofactor.

In terms of biological role, negatively regulates transcription of bacterial ribonucleotide reductase nrd genes and operons by binding to NrdR-boxes. The sequence is that of Transcriptional repressor NrdR from Latilactobacillus sakei subsp. sakei (strain 23K) (Lactobacillus sakei subsp. sakei).